Consider the following 303-residue polypeptide: Coenzyme PQQ synthesis protein B (303 aa).

It belongs to the PqqB family.

Its pathway is cofactor biosynthesis; pyrroloquinoline quinone biosynthesis. In terms of biological role, may be involved in the transport of PQQ or its precursor to the periplasm. In Acinetobacter baumannii (strain ACICU), this protein is Coenzyme PQQ synthesis protein B.